A 254-amino-acid polypeptide reads, in one-letter code: Demethylmenaquinone methyltransferase (254 aa).

S-adenosyl-L-methionine-binding positions include Thr-62, Asp-80, 122 to 123 (DG), and Ser-139.

It belongs to the class I-like SAM-binding methyltransferase superfamily. MenG/UbiE family.

The catalysed reaction is a 2-demethylmenaquinol + S-adenosyl-L-methionine = a menaquinol + S-adenosyl-L-homocysteine + H(+). Its pathway is quinol/quinone metabolism; menaquinone biosynthesis; menaquinol from 1,4-dihydroxy-2-naphthoate: step 2/2. Its function is as follows. Methyltransferase required for the conversion of demethylmenaquinol (DMKH2) to menaquinol (MKH2). This is Demethylmenaquinone methyltransferase from Parafrankia sp. (strain EAN1pec).